The primary structure comprises 490 residues: AP-5 complex subunit mu-1 (490 aa).

The 271-residue stretch at lysine 206–asparagine 476 folds into the MHD domain.

It belongs to the adaptor complexes medium subunit family. In terms of assembly, probably part of the adaptor protein complex 5 (AP-5) a tetramer composed of AP5B1, AP5M1, AP5S1 and AP5Z1.

It localises to the cytoplasm. Its subcellular location is the cytosol. The protein resides in the late endosome membrane. It is found in the lysosome membrane. Functionally, as part of AP-5, a probable fifth adaptor protein complex it may be involved in endosomal transport. The polypeptide is AP-5 complex subunit mu-1 (AP5M1) (Macaca fascicularis (Crab-eating macaque)).